Here is a 575-residue protein sequence, read N- to C-terminus: E3 ubiquitin-protein ligase kcmf-1 (575 aa).

The ZZ-type zinc-finger motif lies at 9-73; it reads HEGVSCDGCA…PMQLILSSVD (65 aa). Zn(2+)-binding residues include C14, C17, C29, C32, C38, C41, H59, and H63. 2 disordered regions span residues 277–306 and 530–575; these read PIYP…DDND and EADE…INID. 2 stretches are compositionally biased toward acidic residues: residues 297 to 306 and 530 to 563; these read SADESEDDND and EADE…ENDS.

This sequence belongs to the KCMF1 family.

The protein localises to the cytoplasm. The protein resides in the late endosome. Its subcellular location is the lysosome. It catalyses the reaction S-ubiquitinyl-[E2 ubiquitin-conjugating enzyme]-L-cysteine + [acceptor protein]-L-lysine = [E2 ubiquitin-conjugating enzyme]-L-cysteine + N(6)-ubiquitinyl-[acceptor protein]-L-lysine.. Its pathway is protein modification; protein ubiquitination. E3 ubiquitin-protein ligase which accepts ubiquitin from an E2 ubiquitin-conjugating enzyme and then transfers it to targeted substrates, promoting their degradation by the proteasome. The protein is E3 ubiquitin-protein ligase kcmf-1 of Caenorhabditis elegans.